Here is a 293-residue protein sequence, read N- to C-terminus: Probable porphobilinogen deaminase (293 aa).

S-(dipyrrolylmethanemethyl)cysteine is present on Cys-233.

Belongs to the HMBS family. The cofactor is dipyrromethane.

It catalyses the reaction 4 porphobilinogen + H2O = hydroxymethylbilane + 4 NH4(+). It functions in the pathway porphyrin-containing compound metabolism; protoporphyrin-IX biosynthesis; coproporphyrinogen-III from 5-aminolevulinate: step 2/4. Its function is as follows. Tetrapolymerization of the monopyrrole PBG into the hydroxymethylbilane pre-uroporphyrinogen in several discrete steps. The sequence is that of Probable porphobilinogen deaminase from Saccharolobus islandicus (strain Y.N.15.51 / Yellowstone #2) (Sulfolobus islandicus).